Reading from the N-terminus, the 526-residue chain is Reticulocyte-binding protein homolog 5 (526 aa).

The first 24 residues, 1–24, serve as a signal peptide directing secretion; the sequence is MIRIKKKLILTIIYIHLFILNRLS. Residues 33–51 form a mediates interaction with human BSG region; it reads KNQENNLTLLPIKSTEEEK. N38 and N214 each carry an N-linked (GlcNAc...) asparagine glycan. 2 disulfides stabilise this stretch: C224–C317 and C345–C351. The span at 259–279 shows a compositional bias: acidic residues; sequence EIDDKSEETDDETEEVEDSIQ. Residues 259–294 form a disordered region; sequence EIDDKSEETDDETEEVEDSIQDTDSNHTPSNKKKND. N-linked (GlcNAc...) asparagine glycosylation occurs at N297.

In terms of assembly, forms a complex composed of RH5, P113 and human BSG/basigin; the complex bridges the merozoite and host erythrocyte membranes. Within the complex, interacts (via C-terminus) with human BSG/basigin isoform 2 (via the extracellular domain); the interaction is independent of BSG glycosylation status. Weakly interacts with P.troglodytes BSG but not with G.gorilla BSG. Also, interacts (via N-terminus) with P113; the interaction tethers RH5 to the merozoite membrane. Component of the PfRH5 adhesion complex composed of 1 copy of CyRPA, RH5 and RIPR; the complex is formed during merozoite invasion of host erythrocytes specifically at the interface between the parasite and host membranes. Within the complex, interacts with CyRPA. CyRPA recruits RIPR to the RH5-P113-BSG complex; the formation of the PfRH5 adhesion complex increases the affinity of RH5 for BSG and probably leads to the release of RH5 from P113 while maintaining the interaction of the PfRH5 adhesion complex with BSG. Cleaved into a 45kDa form during merozoite invasion of host erythrocyte.

The protein localises to the secreted. It localises to the cytoplasmic vesicle. It is found in the secretory vesicle. The protein resides in the rhoptry lumen. Its subcellular location is the host cell membrane. Functionally, essential for the invasion of host erythrocytes by blood stage merozoites. By binding P113 at the surface of the merozoite and human BSG/basigin on the erythrocyte membrane, leads to the establishment of a tight junction between the merozoite and host erythrocyte membranes. In addition, the interaction with BSG results in BSG dimerization which triggers an increase in intracellular Ca(2+) in the erythrocyte. This essential step leads to a rearrangement of the erythrocyte cytoskeleton required for the merozoite invasion. The polypeptide is Reticulocyte-binding protein homolog 5 (Plasmodium falciparum (isolate 3D7)).